The primary structure comprises 248 residues: MAELDPFGAPAGAPGGPALGNGVAGAGEEDPAAAFLAQQESEIAGIENDEAFAILDGGAPGPQPHGEPPGGPDAVDGVMNGEYYQESNGPTDSYAAISQVDRLQSEPESIRKWREEQMERLEALDANSRKQEAEWKEKAIKELEEWYARQDEQLQKTKANNRVADEAFYKQPFADVIGYVTNINHPCYSLEQAAEEAFVNDIDESSPGTEWERVARLCDFNPKSSKQAKDVSRMRSVLISLKQAPLVH.

The disordered stretch occupies residues 1–92; it reads MAELDPFGAP…YYQESNGPTD (92 aa). The segment covering 13–25 has biased composition (gly residues); that stretch reads APGGPALGNGVAG. Residues 61-71 show a composition bias toward pro residues; that stretch reads GPQPHGEPPGG. Positions 100 to 162 are involved in binding clathrin heavy chain; the sequence is VDRLQSEPES…QLQKTKANNR (63 aa). Ser105 and Ser206 each carry phosphoserine. At Lys223 the chain carries N6-acetyllysine. Ser236 is subject to Phosphoserine. Lys242 carries the post-translational modification N6-acetyllysine.

This sequence belongs to the clathrin light chain family. Clathrin coats are formed from molecules containing 3 heavy chains and 3 light chains. Interacts with CALY; the interaction stimulates clathrin self-assembly and clathrin-mediated endocytosis. Interacts with CKAP5 and TACC3 forming the TACC3/ch-TOG/clathrin complex located at spindle inter-microtubules bridges; the complex implicates clathrin triskelions.

The protein resides in the cytoplasmic vesicle membrane. It is found in the membrane. Its subcellular location is the coated pit. The protein localises to the cytoplasm. It localises to the cytoskeleton. The protein resides in the spindle. Its function is as follows. Clathrin is the major protein of the polyhedral coat of coated pits and vesicles. Acts as a component of the TACC3/ch-TOG/clathrin complex proposed to contribute to stabilization of kinetochore fibers of the mitotic spindle by acting as inter-microtubule bridge. The protein is Clathrin light chain A (CLTA) of Homo sapiens (Human).